A 263-amino-acid polypeptide reads, in one-letter code: MRFSSWALVSLVAGVYMSSECFHTEIIGGREVQPHSRPFMASIQYRSKHICGGVLIHPQWVLTAAHCYSWFPRGHSPTVVLGAHSLSKNEPMKQTFEIKKFIPFSRLQSGSASHDIMLIKLRTAAELNKNVQLLHLGSKNYLRDGTKCQVTGWGTTKPDLLTASDTLREVTVTIISRKRCNSQSYYNHKPVITKDMICAGDARGQKDSCKGDSGGPLICKGIFHALVSQGYKCGIAKKPGIYTLLTKKYQTWIKSKLAPSRAH.

The first 21 residues, 1-21, serve as a signal peptide directing secretion; sequence MRFSSWALVSLVAGVYMSSEC. Residues 22–25 constitute a propeptide, activation peptide; sequence FHTE. Residues 26-258 form the Peptidase S1 domain; sequence IIGGREVQPH…YQTWIKSKLA (233 aa). A disulfide bond links Cys-51 and Cys-67. Residues His-66 and Asp-115 each act as charge relay system in the active site. 3 cysteine pairs are disulfide-bonded: Cys-148–Cys-219, Cys-180–Cys-198, and Cys-209–Cys-233. Ser-213 acts as the Charge relay system in catalysis.

This sequence belongs to the peptidase S1 family. Granzyme subfamily.

It is found in the cytoplasmic granule. The sequence is that of Granzyme K (Gzmk) from Mus musculus (Mouse).